The following is a 437-amino-acid chain: Transcription factor 12 (437 aa).

Disordered regions lie at residues 1–68, 80–123, and 244–335; these read EFHD…QTGD, PDHT…YENS, and ASNT…ERRM. The segment covering 13–37 has biased composition (polar residues); sequence VSPTDISTSLPPMSSFHRGSTSSSP. Thr-44 carries the post-translational modification Phosphothreonine. Phosphoserine is present on Ser-64. Over residues 83–94 the composition is skewed to low complexity; sequence TSSSFPSNPSTP. 2 stretches are compositionally biased toward polar residues: residues 95 to 107 and 114 to 123; these read VGSP…TSQW and APSSPSYENS. Composition is skewed to basic and acidic residues over residues 273–285 and 291–306; these read IKTE…ENLH and DDMK…DIKV. Residue Lys-274 forms a Glycyl lysine isopeptide (Lys-Gly) (interchain with G-Cter in SUMO2) linkage. Position 295 is a phosphoserine (Ser-295). Lys-305 is covalently cross-linked (Glycyl lysine isopeptide (Lys-Gly) (interchain with G-Cter in SUMO2)). A Phosphothreonine modification is found at Thr-312. Phosphoserine is present on residues Ser-313 and Ser-314. Residues 323–335 show a composition bias toward basic and acidic residues; that stretch reads PEQKIEREKERRM. A bHLH domain is found at 332 to 385; sequence ERRMANNARERLRVRDINEAFKELGRMCQLHLKSEKPQTKLLILHQAVAVILSL. Glycyl lysine isopeptide (Lys-Gly) (interchain with G-Cter in SUMO2) cross-links involve residues Lys-364 and Lys-408. The class A specific domain stretch occupies residues 387-410; the sequence is QQVRERNLNPKAACLKRREEEKVS. Residues 405–437 are disordered; sequence EEEKVSAASAEPPTTLPGTHPGLSETTNPMGHL. Over residues 416-427 the composition is skewed to low complexity; sequence PPTTLPGTHPGL. The span at 428-437 shows a compositional bias: polar residues; that stretch reads SETTNPMGHL.

As to quaternary structure, efficient DNA binding requires dimerization with another bHLH protein. Forms homo- or heterooligomers with myogenin, E12 and ITF2 proteins. Interacts with NEUROD2. Interacts with PTF1A. Interacts with RUNX1T1. Interacts with BHLHA9.

The protein resides in the nucleus. In terms of biological role, transcriptional regulator. Involved in the initiation of neuronal differentiation. Activates transcription by binding to the E box (5'-CANNTG-3'). Participates in the control of inducible RP4 gene expression in salivary cells. Binds to the RIPE3 element of the insulin II promoter. May be involved in the functional network that regulates the development of the GnRH axis. In Mesocricetus auratus (Golden hamster), this protein is Transcription factor 12 (TCF12).